A 320-amino-acid chain; its full sequence is Malate dehydrogenase (320 aa).

NAD(+) contacts are provided by residues 10-15 (GSGMIG) and D34. Substrate-binding residues include R83 and R89. NAD(+) is bound by residues N96 and 119–121 (ITN). N121 and R152 together coordinate substrate. H176 functions as the Proton acceptor in the catalytic mechanism.

This sequence belongs to the LDH/MDH superfamily. MDH type 3 family.

It carries out the reaction (S)-malate + NAD(+) = oxaloacetate + NADH + H(+). Functionally, catalyzes the reversible oxidation of malate to oxaloacetate. In Brucella melitensis biotype 1 (strain ATCC 23456 / CCUG 17765 / NCTC 10094 / 16M), this protein is Malate dehydrogenase.